The sequence spans 312 residues: tRNA-dihydrouridine(16) synthase (312 aa).

FMN is bound by residues Pro7 to Glu9 and Gln68. The active-site Proton donor is the Cys98. Residues Lys139, Asn200–Glu202, and Gly224–Arg225 each bind FMN.

It belongs to the Dus family. DusC subfamily. It depends on FMN as a cofactor.

The enzyme catalyses 5,6-dihydrouridine(16) in tRNA + NADP(+) = uridine(16) in tRNA + NADPH + H(+). It carries out the reaction 5,6-dihydrouridine(16) in tRNA + NAD(+) = uridine(16) in tRNA + NADH + H(+). Its function is as follows. Catalyzes the synthesis of 5,6-dihydrouridine (D), a modified base found in the D-loop of most tRNAs, via the reduction of the C5-C6 double bond in target uridines. Specifically modifies U16 in tRNAs. In Salmonella typhimurium (strain LT2 / SGSC1412 / ATCC 700720), this protein is tRNA-dihydrouridine(16) synthase.